Here is a 297-residue protein sequence, read N- to C-terminus: Ribosomal RNA small subunit methyltransferase A (297 aa).

Asparagine 28, leucine 30, glycine 55, glutamate 76, aspartate 101, and asparagine 126 together coordinate S-adenosyl-L-methionine.

This sequence belongs to the class I-like SAM-binding methyltransferase superfamily. rRNA adenine N(6)-methyltransferase family. RsmA subfamily.

The protein localises to the cytoplasm. It catalyses the reaction adenosine(1518)/adenosine(1519) in 16S rRNA + 4 S-adenosyl-L-methionine = N(6)-dimethyladenosine(1518)/N(6)-dimethyladenosine(1519) in 16S rRNA + 4 S-adenosyl-L-homocysteine + 4 H(+). In terms of biological role, specifically dimethylates two adjacent adenosines (A1518 and A1519) in the loop of a conserved hairpin near the 3'-end of 16S rRNA in the 30S particle. May play a critical role in biogenesis of 30S subunits. The chain is Ribosomal RNA small subunit methyltransferase A from Latilactobacillus sakei subsp. sakei (strain 23K) (Lactobacillus sakei subsp. sakei).